The primary structure comprises 437 residues: F-box only protein 9 (437 aa).

Positions 1–29 (MAEAEEDCHSEAVREGDDDDENESPAETD) are disordered. The span at 16–26 (GDDDDENESPA) shows a compositional bias: acidic residues. The stretch at 84–117 (ARELFLKAVEEEQNGALYEAIKFYRRAMQLVPDI) is one TPR repeat. At Ser126 the chain carries Phosphoserine. The F-box domain occupies 175 to 226 (QTHISALPMEVLMYVFRWVVSSDLDLRSLEQLSQVCRGFYICARDPEIWRLA).

In terms of assembly, part of the SCF (SKP1-CUL1-F-box) E3 ubiquitin-protein ligase complex SCF(FBXO9) composed of CUL1, SKP1, RBX1 and FBXO9. Interacts with TTI1 and TELO2; when TTI1 and TELO2 are phosphorylated by CK2.

The protein localises to the cytoplasm. The protein operates within protein modification; protein ubiquitination. In terms of biological role, substrate recognition component of a SCF (SKP1-CUL1-F-box protein) E3 ubiquitin-protein ligase complex which mediates the ubiquitination and subsequent proteasomal degradation of target proteins and plays a role in several biological processes such as cell cycle, cell proliferation, or maintenance of chromosome stability. Ubiquitinates mTORC1-bound TTI1 and TELO2 when they are phosphorylated by CK2 following growth factor deprivation, leading to their degradation. In contrast, does not mediate ubiquitination of TTI1 and TELO2 when they are part of the mTORC2 complex. As a consequence, mTORC1 is inactivated to restrain cell growth and protein translation, while mTORC2 is the activated due to the relief of feedback inhibition by mTORC1. Plays a role in maintaining epithelial cell survival by regulating the turn-over of chromatin modulator PRMT4 through ubiquitination and degradation by the proteasomal pathway. Also regulates PPARgamma stability by facilitating PPARgamma/PPARG ubiquitination and thereby plays a role in adipocyte differentiation. The sequence is that of F-box only protein 9 (FBXO9) from Bos taurus (Bovine).